A 195-amino-acid chain; its full sequence is uncharacterized protein (195 aa).

A disordered region spans residues 143-195 (NKLIETINTNRTNNTDNKSTKSKKQTETKKSLRTNKIVKQPINKSKKNIREEY). Residues 148–159 (TINTNRTNNTDN) are compositionally biased toward low complexity.

This is an uncharacterized protein from Acanthamoeba polyphaga (Amoeba).